The primary structure comprises 145 residues: Photosystem I reaction center subunit VI-1, chloroplastic (145 aa).

Residues 1 to 50 (MASLATVAAVKPSAAIKGLGGSSLAGAKLSIKPSRLSFKPKSIRANGVVA) constitute a chloroplast transit peptide. Residues 102–118 (LLLKFLILGGGSLLTYV) form a helical membrane-spanning segment.

Belongs to the psaH family.

Its subcellular location is the plastid. It is found in the chloroplast thylakoid membrane. Functionally, possible role could be the docking of the LHC I antenna complex to the core complex. The polypeptide is Photosystem I reaction center subunit VI-1, chloroplastic (PSAH1) (Arabidopsis thaliana (Mouse-ear cress)).